Here is a 593-residue protein sequence, read N- to C-terminus: Metal-response element-binding transcription factor 2 (593 aa).

A disordered region spans residues 1-35 (MRDSTGAGNSLVHKRSPLRRNQKTPTSLTKLSLQD). Over residues 12–22 (VHKRSPLRRNQ) the composition is skewed to basic residues. Polar residues predominate over residues 23 to 32 (KTPTSLTKLS). The residue at position 24 (Thr24) is a Phosphothreonine. The 58-residue stretch at 44–101 (CKFEEGQDVLARWSDGLFYLGTIKKINILKQSCFIIFEDSSKSWVLWKDIQTGATGSG) folds into the Tudor domain. 2 PHD-type zinc fingers span residues 102–157 (EMVC…CVFA) and 201–255 (QCYC…CSSG). Lys360 participates in a covalent cross-link: Glycyl lysine isopeptide (Lys-Gly) (interchain with G-Cter in SUMO2). The span at 360–374 (KAEKEPEGTSHEFKI) shows a compositional bias: basic and acidic residues. Disordered stretches follow at residues 360–411 (KAEK…PYTR) and 424–486 (KESI…TRTG). Polar residues predominate over residues 445-454 (TAHSSNTSDV). Residue Ser452 is modified to Phosphoserine. The span at 459-471 (ASSAKETTSSSIS) shows a compositional bias: low complexity. Residue Lys522 forms a Glycyl lysine isopeptide (Lys-Gly) (interchain with G-Cter in SUMO2) linkage.

This sequence belongs to the Polycomblike family. Associates with the PRC2 complex, which consists of the core components EED, EZH1 or EZH2, SUZ12, and RBBP4, and various combinations of accessory subunits including AEBP2, JARID2, PHF19, MTF2 and EPOP. Forms a dimeric PRC2.1 (class 1, PRC-PCL) complex consisting of at least SUZ12, RBBP4, and PHF19 or MTF2; PHF19 and MTF2 stabilize the dimeric structure which enhances PRC2 interaction with chromatin.

It is found in the nucleus. Polycomb group (PcG) protein that specifically binds histone H3 trimethylated at 'Lys-36' (H3K36me3) and recruits the PRC2 complex, thus enhancing PRC2 H3K27me3 methylation activity. Regulates the transcriptional networks during embryonic stem cell self-renewal and differentiation. Promotes recruitment of the PRC2 complex to the inactive X chromosome in differentiating XX ES cells and PRC2 recruitment to target genes in undifferentiated ES cells. Required to repress Hox genes by enhancing H3K27me3 methylation of the PRC2 complex. In some conditions may act as an inhibitor of PRC2 activity: able to activate the CDKN2A gene and promote cellular senescence by suppressing the catalytic activity of the PRC2 complex locally. Binds to the metal-regulating-element (MRE) of MT1A gene promoter. This chain is Metal-response element-binding transcription factor 2 (MTF2), found in Homo sapiens (Human).